The following is a 97-amino-acid chain: NADH dehydrogenase [ubiquinone] 1 alpha subcomplex subunit 2 (97 aa).

A disulfide bridge links C19 with C53.

Belongs to the complex I NDUFA2 subunit family. As to quaternary structure, complex I is composed of at least 49 different subunits.

The protein localises to the mitochondrion inner membrane. Functionally, accessory subunit of the mitochondrial membrane respiratory chain NADH dehydrogenase (Complex I), that is believed not to be involved in catalysis. Complex I functions in the transfer of electrons from NADH to the respiratory chain. The immediate electron acceptor for the enzyme is believed to be ubiquinone. The chain is NADH dehydrogenase [ubiquinone] 1 alpha subcomplex subunit 2 from Arabidopsis thaliana (Mouse-ear cress).